The sequence spans 119 residues: Small ribosomal subunit protein uS13 (119 aa).

A compositionally biased stretch (basic residues) spans 92 to 110; that stretch reads RKDTCKRSTKKNARTRKGP. A disordered region spans residues 92–119; that stretch reads RKDTCKRSTKKNARTRKGPKKDNRWKER.

The protein belongs to the universal ribosomal protein uS13 family. Part of the 30S ribosomal subunit. Forms a loose heterodimer with protein S19. Forms two bridges to the 50S subunit in the 70S ribosome.

Its function is as follows. Located at the top of the head of the 30S subunit, it contacts several helices of the 16S rRNA. In the 70S ribosome it contacts the 23S rRNA (bridge B1a) and protein L5 of the 50S subunit (bridge B1b), connecting the 2 subunits; these bridges are implicated in subunit movement. Contacts the tRNAs in the A and P-sites. The chain is Small ribosomal subunit protein uS13 from Mycoplasma sp.